We begin with the raw amino-acid sequence, 344 residues long: L-rhamnose-proton symporter (344 aa).

10 consecutive transmembrane segments (helical) span residues 4-24 (AITM…CFYA), 38-58 (WSVG…ALLL), 68-88 (FSLS…IGNI), 101-121 (MGIG…TPII), 137-157 (TLLG…AGQL), 175-195 (LVLA…MNAA), 214-234 (LPSY…FCFI), 259-279 (VLLS…YAWG), 290-310 (ISWM…GLVL), and 323-343 (VLSL…IGMA).

The protein belongs to the L-rhamnose transporter (TC 2.A.7.6) family.

The protein localises to the cell inner membrane. The catalysed reaction is L-rhamnopyranose(in) + H(+)(in) = L-rhamnopyranose(out) + H(+)(out). In terms of biological role, uptake of L-rhamnose across the cytoplasmic membrane with the concomitant transport of protons into the cell (symport system). The protein is L-rhamnose-proton symporter of Escherichia coli O1:K1 / APEC.